The following is a 435-amino-acid chain: MKTQIEIAREGTISSQMMAVAAEEHVSPDYVRQMVAEGKIVIPGNHSRKPRAVGIGKGLRTKVNASIGTSSDIIDYGAEVRKALAAQEAGADTLMELSVGGDLDRVRREVIAAVDLPVGNVPLYQAFCEAARKYGDPNKLDPEMLFDLIEKQCEDGMAFMAVHCGINLYTIERLKRQGYRYGGLVSKGGVSMVAWMMANRRENPLYEQFDRVTSILRKYDTVLSLGNGLRAGAIHDSSDRAQIQELLINCELAELGREMGCQMLVEGPGHVPLDEVEGNIQLQKRMSGGAPYYMLGPISTDVAPGFDHITAAIGAAQSSRYGADLICYITPAEHLALPNEEDVRQGVKAAKIAAYIGDMNKYPERGRERDKEMSKARRDLDWKKQFELALFPEDAKAIRASRTPEDEATCTMCGDFCASRGAGKLFAADLRGDKI.

Residues M95, Y124, H163, 186-188 (SKG), 227-230 (NGLR), and E266 contribute to the substrate site. Position 270 (H270) interacts with Zn(2+). Y293 is a substrate binding site. A Zn(2+)-binding site is contributed by H334. 3 residues coordinate [4Fe-4S] cluster: C410, C413, and C417.

The protein belongs to the ThiC family. 5-hydroxybenzimidazole synthase subfamily. Homodimer. [4Fe-4S] cluster is required as a cofactor.

It catalyses the reaction 5-amino-1-(5-phospho-beta-D-ribosyl)imidazole + AH2 + S-adenosyl-L-methionine = 5-hydroxybenzimidazole + 5'-deoxyadenosine + formate + L-methionine + A + NH4(+) + phosphate + 2 H(+). Its function is as follows. Catalyzes the conversion of aminoimidazole ribotide (AIR) to 5-hydroxybenzimidazole (5-HBI) in a radical S-adenosyl-L-methionine (SAM)-dependent reaction. Is thus involved in the anaerobic biosynthesis of the benzimidazole lower axial ligand of the cobamide produced by G.metallireducens. The polypeptide is 5-hydroxybenzimidazole synthase (Geobacter metallireducens (strain ATCC 53774 / DSM 7210 / GS-15)).